Here is an 87-residue protein sequence, read N- to C-terminus: Small ribosomal subunit protein uS15 (87 aa).

The protein belongs to the universal ribosomal protein uS15 family. As to quaternary structure, part of the 30S ribosomal subunit. Forms a bridge to the 50S subunit in the 70S ribosome, contacting the 23S rRNA.

Its function is as follows. One of the primary rRNA binding proteins, it binds directly to 16S rRNA where it helps nucleate assembly of the platform of the 30S subunit by binding and bridging several RNA helices of the 16S rRNA. In terms of biological role, forms an intersubunit bridge (bridge B4) with the 23S rRNA of the 50S subunit in the ribosome. This is Small ribosomal subunit protein uS15 from Clostridium botulinum (strain Eklund 17B / Type B).